Consider the following 201-residue polypeptide: Pyridoxal 5'-phosphate synthase subunit PdxT (201 aa).

50-52 serves as a coordination point for L-glutamine; that stretch reads GES. The active-site Nucleophile is the Cys-82. L-glutamine contacts are provided by residues Arg-115 and 143 to 144; that span reads IR. Active-site charge relay system residues include His-179 and Glu-181.

This sequence belongs to the glutaminase PdxT/SNO family. As to quaternary structure, in the presence of PdxS, forms a dodecamer of heterodimers. Only shows activity in the heterodimer.

The enzyme catalyses aldehydo-D-ribose 5-phosphate + D-glyceraldehyde 3-phosphate + L-glutamine = pyridoxal 5'-phosphate + L-glutamate + phosphate + 3 H2O + H(+). It carries out the reaction L-glutamine + H2O = L-glutamate + NH4(+). The protein operates within cofactor biosynthesis; pyridoxal 5'-phosphate biosynthesis. Catalyzes the hydrolysis of glutamine to glutamate and ammonia as part of the biosynthesis of pyridoxal 5'-phosphate. The resulting ammonia molecule is channeled to the active site of PdxS. The sequence is that of Pyridoxal 5'-phosphate synthase subunit PdxT from Deinococcus geothermalis (strain DSM 11300 / CIP 105573 / AG-3a).